Reading from the N-terminus, the 287-residue chain is Intermediate filament family orphan 2 (287 aa).

In terms of domain architecture, IF rod spans 1-254; the sequence is MNLQTMVDTL…RLIKGSADRN (254 aa). A disordered region spans residues 248 to 287; it reads KGSADRNSPSPSSVASSDSGSTDEIQDDLEREADVEPMVS. Over residues 255 to 267 the composition is skewed to low complexity; the sequence is SPSPSSVASSDSG. The segment covering 271-287 has biased composition (acidic residues); the sequence is EIQDDLEREADVEPMVS.

The protein belongs to the intermediate filament family.

In Rattus norvegicus (Rat), this protein is Intermediate filament family orphan 2 (Iffo2).